The following is a 467-amino-acid chain: MATEYALRMGDGKRIFLTKDKIIEELEAGMANASDLGEIPDLSGDEIDKLAEILMMPGKAVSVEQGMEVPVTHDIGTLRLDGDQGNSGVGIPSSRLVGCMMHERAFGADTMELGHIDYSYKPVKPVVANECQAMEVCQQNMIIPLFYGAMPNMGLYYTPDGPFENPGDLMKAFKIQEAWDSMEHAAAHLTRDTVWVMQKLFASGADGVNFDTTAAAGDADMYGTLHAIEALRKEFPDMYIEAGMAGECVLGMHGNLQYDGVTLAGLWPHQQAPLIAKAGANVFGPVCNTNTSKTSPWNLARAVNFMKAAVQASSIPCHVDMGMGVGGIPMLETPPIDAVTRASKAMVEIAGVDGIOIGVGDPLGMPISHIMASGMTGMRAAGDLVARMQFSKNMKIKEAKEYVAKKLNVETMDLADEYVMRELREELDIGVITSVPGAAKGIAAKMNIEKLLDVKINSCNLFRKQTR.

Pyl-356 is a non-standard amino acid (pyrrolysine).

The protein belongs to the dimethylamine methyltransferase family.

The enzyme catalyses Co(I)-[dimethylamine-specific corrinoid protein] + dimethylamine + H(+) = methyl-Co(III)-[dimethylamine-specific corrinoid protein] + methylamine. It participates in one-carbon metabolism; methanogenesis from dimethylamine. Functionally, catalyzes the transfer of a methyl group from dimethylamine to the corrinoid cofactor of MtbC. This Methanosarcina mazei (strain ATCC BAA-159 / DSM 3647 / Goe1 / Go1 / JCM 11833 / OCM 88) (Methanosarcina frisia) protein is Dimethylamine methyltransferase MtbB3 (mtbB3).